The chain runs to 430 residues: Tol-Pal system protein TolB (430 aa).

An N-terminal signal peptide occupies residues 1–21 (MKQALRVAFGFLILWASVLHA).

The protein belongs to the TolB family. As to quaternary structure, the Tol-Pal system is composed of five core proteins: the inner membrane proteins TolA, TolQ and TolR, the periplasmic protein TolB and the outer membrane protein Pal. They form a network linking the inner and outer membranes and the peptidoglycan layer.

Its subcellular location is the periplasm. In terms of biological role, part of the Tol-Pal system, which plays a role in outer membrane invagination during cell division and is important for maintaining outer membrane integrity. TolB occupies a key intermediary position in the Tol-Pal system because it communicates directly with both membrane-embedded components, Pal in the outer membrane and TolA in the inner membrane. This is Tol-Pal system protein TolB from Escherichia coli O139:H28 (strain E24377A / ETEC).